A 342-amino-acid polypeptide reads, in one-letter code: Peroxisomal membrane protein import receptor PEX19 (342 aa).

Residues 1 to 18 (MNENEYDNFDDLDDLLDE) show a composition bias toward acidic residues. Disordered regions lie at residues 1–68 (MNEN…DPEL) and 119–141 (CSSL…GFKN). Over residues 41 to 54 (SENKEKNAESKDSD) the composition is skewed to basic and acidic residues. A Phosphoserine modification is found at S62. Residue S304 is modified to Phosphoserine. The tract at residues 321–342 (IDGNDPNLGNLDKELTDGCKQQ) is disordered. Residues 331–342 (LDKELTDGCKQQ) show a composition bias toward basic and acidic residues. Position 339 is a cysteine methyl ester (C339). A lipid anchor (S-farnesyl cysteine) is attached at C339. A propeptide spans 340–342 (KQQ) (removed in mature form).

This sequence belongs to the peroxin-19 family. As to quaternary structure, interacts (farnesylated) with PEX3; farnesylation is required for this interaction. Interacts with PEX2, PEX5, PEX10, PEX11, PEX12, PEX13, PEX14, PEX17, PEX22, PEX25, PEX30 and PEX32; the interaction requires well-defined PEX19-binding sites within the peroxisomal membrane protein targeting signal (mPTS) of the PMPs and is independent on the presence of PEX3. Interacts with VPS1.

It localises to the cytoplasm. The protein localises to the peroxisome membrane. Its subcellular location is the endoplasmic reticulum membrane. Functionally, required for proper post-translational import and stabilization of peroxisomal membrane proteins (PMPs). Acts as a cytosolic import receptor for PMPs and delivers them to the docking factor PEX3 at the peroxisomal membrane for subsequent insertion into the membrane. Acts as a chaperone in stabilizing or maintaining PMPs in the lipid bilayer. Directs PEX17, a peripheral component of the peroxisomal matrix protein translocation machinery, to peroxisomes. Stabilizes VPS1, a protein required for peroxisomal fission, at the peroxisomal membrane. Also acts in conjunction with PEX3 in the formation of peroxisomes from preperoxisomal compartments at the endoplasmic reticulum during de novo peroxisome synthesis, probably via the import of additional PMPs. This Saccharomyces cerevisiae (strain ATCC 204508 / S288c) (Baker's yeast) protein is Peroxisomal membrane protein import receptor PEX19 (PEX19).